We begin with the raw amino-acid sequence, 281 residues long: 4-deoxy-L-threo-5-hexosulose-uronate ketol-isomerase (281 aa).

Residues His-198, His-200, Glu-205, and His-248 each contribute to the Zn(2+) site.

It belongs to the KduI family. It depends on Zn(2+) as a cofactor.

It carries out the reaction 5-dehydro-4-deoxy-D-glucuronate = 3-deoxy-D-glycero-2,5-hexodiulosonate. Its pathway is glycan metabolism; pectin degradation; 2-dehydro-3-deoxy-D-gluconate from pectin: step 4/5. In terms of biological role, catalyzes the isomerization of 5-dehydro-4-deoxy-D-glucuronate to 3-deoxy-D-glycero-2,5-hexodiulosonate. This chain is 4-deoxy-L-threo-5-hexosulose-uronate ketol-isomerase, found in Lacticaseibacillus casei (strain BL23) (Lactobacillus casei).